The following is a 300-amino-acid chain: 3-hydroxy-3-isohexenylglutaryl-CoA/hydroxy-methylglutaryl-CoA lyase (300 aa).

In terms of domain architecture, Pyruvate carboxyltransferase spans 7–274; it reads VRLVEVGPRD…HTGVDMHALV (268 aa). R15 provides a ligand contact to substrate. A divalent metal cation-binding residues include D16, H207, and H209. Residue C240 is part of the active site. N249 lines the a divalent metal cation pocket.

This sequence belongs to the HMG-CoA lyase family. In terms of assembly, homodimer. Mg(2+) serves as cofactor. It depends on Mn(2+) as a cofactor.

The enzyme catalyses 3-hydroxy-3-(4-methylpent-3-en-1-yl)glutaryl-CoA = 7-methyl-3-oxooct-6-enoyl-CoA + acetate. It catalyses the reaction (3S)-3-hydroxy-3-methylglutaryl-CoA = acetoacetate + acetyl-CoA. It participates in metabolic intermediate metabolism; (S)-3-hydroxy-3-methylglutaryl-CoA degradation; acetoacetate from (S)-3-hydroxy-3-methylglutaryl-CoA: step 1/1. Its function is as follows. Involved in the L-leucine, isovalerate and acyclic monoterpene catabolism. Catalyzes the cleavage of 3-hydroxy-3-methylglutaryl-CoA (HMG-CoA) to yield acetyl-CoA and acetoacetate. It can also catalyze the cleavage of 3-hydroxy-3-isohexenylglutaryl-CoA (HIHG_CoA) to yield 7-methyl-3-oxooct-6-enoyl-CoA and acetate. The polypeptide is 3-hydroxy-3-isohexenylglutaryl-CoA/hydroxy-methylglutaryl-CoA lyase (Pseudomonas aeruginosa (strain ATCC 15692 / DSM 22644 / CIP 104116 / JCM 14847 / LMG 12228 / 1C / PRS 101 / PAO1)).